Here is a 196-residue protein sequence, read N- to C-terminus: MPPKGWRKDAQGNYPTTSYIKEQENITIQDLLFPKSTIVNLAREVPQQSGKKLLINKDASLALQRGATVFVNHLLLFAREIAKSQDKKSCSVDDVLSALDHIGHSALKGPVRDKLDEYQAAVEQRKKEKLDSGEVDADGDIDMGEDKENVPVEKVKEHDEIEEQGDALQDVEESSEKKQKTESQDVETRVQNLEQT.

Positions 125 to 196 (RKKEKLDSGE…ETRVQNLEQT (72 aa)) are disordered. The segment covering 133–143 (GEVDADGDIDM) has biased composition (acidic residues). A compositionally biased stretch (basic and acidic residues) spans 144–159 (GEDKENVPVEKVKEHD). Over residues 160 to 173 (EIEEQGDALQDVEE) the composition is skewed to acidic residues. The segment covering 174–188 (SSEKKQKTESQDVET) has biased composition (basic and acidic residues). At S183 the chain carries Phosphoserine; by ATM or ATR.

DNA polymerase epsilon is a heterotetramer consisting of POL2, DPB2, DPB3 and DPB4. Component of the ISW2 complex, which at least consists of ISW2, ITC1, DLS1 and DPB4.

Its subcellular location is the nucleus. Its function is as follows. As accessory component of the DNA polymerase epsilon (DNA polymerase II) participates in chromosomal DNA replication. It is required during synthesis of the leading and lagging DNA strands at the replication fork and binds at/or near replication origins and moves along DNA with the replication fork. It has 3'-5' proofreading exonuclease activity that correct errors arising during DNA replication. It is also involved in DNA synthesis during DNA repair. Also functions as a component of the ISW2 complex, which acts in remodeling the chromatin by catalyzing an ATP-dependent alteration in the structure of nucleosomal DNA. The ISW2 complex is involved in coordinating transcriptional repression and in inheritance of telomeric silencing. It is involved in repression of MAT a-specific genes, INO1, and early meiotic genes during mitotic growth dependent upon transcription factor UME6 and in a parallel pathway to the RPD3-SIN3 histone deacetylase complex. The chain is DNA polymerase epsilon subunit D (DPB4) from Saccharomyces cerevisiae (strain ATCC 204508 / S288c) (Baker's yeast).